The chain runs to 444 residues: Exodeoxyribonuclease 7 large subunit (444 aa).

This sequence belongs to the XseA family. Heterooligomer composed of large and small subunits.

It localises to the cytoplasm. The enzyme catalyses Exonucleolytic cleavage in either 5'- to 3'- or 3'- to 5'-direction to yield nucleoside 5'-phosphates.. Functionally, bidirectionally degrades single-stranded DNA into large acid-insoluble oligonucleotides, which are then degraded further into small acid-soluble oligonucleotides. The chain is Exodeoxyribonuclease 7 large subunit from Pseudoalteromonas translucida (strain TAC 125).